Consider the following 335-residue polypeptide: MLP-like protein 28 (335 aa).

Belongs to the MLP family.

Its function is as follows. Can bind steroids (in vitro), and may also bind other types of hydrophobic ligands. The polypeptide is MLP-like protein 28 (MLP28) (Arabidopsis thaliana (Mouse-ear cress)).